The following is a 739-amino-acid chain: Copalyl diphosphate synthase 1 (739 aa).

Residue K154 participates in substrate binding. Positions 287 and 289 each coordinate Mg(2+). A DXDD motif motif is present at residues 287–290 (DADD). A substrate-binding site is contributed by K373.

It belongs to the terpene synthase family. Mg(2+) is required as a cofactor.

The enzyme catalyses (2E,6E,10E)-geranylgeranyl diphosphate = (+)-copalyl diphosphate. Its pathway is secondary metabolite biosynthesis; terpenoid biosynthesis. In terms of biological role, monofunctional diterpene synthase converting geranylgeranyl diphosphate to copalyl diphosphate. This chain is Copalyl diphosphate synthase 1 (CPS1), found in Selaginella moellendorffii (Spikemoss).